A 195-amino-acid chain; its full sequence is Orotate phosphoribosyltransferase (195 aa).

5-phospho-alpha-D-ribose 1-diphosphate contacts are provided by residues Arg-87, Lys-91, and Asp-112–Ser-120. 2 residues coordinate orotate: Thr-116 and Arg-144.

This sequence belongs to the purine/pyrimidine phosphoribosyltransferase family. PyrE subfamily. In terms of assembly, homodimer. The cofactor is Mg(2+).

The enzyme catalyses orotidine 5'-phosphate + diphosphate = orotate + 5-phospho-alpha-D-ribose 1-diphosphate. It functions in the pathway pyrimidine metabolism; UMP biosynthesis via de novo pathway; UMP from orotate: step 1/2. Functionally, catalyzes the transfer of a ribosyl phosphate group from 5-phosphoribose 1-diphosphate to orotate, leading to the formation of orotidine monophosphate (OMP). The chain is Orotate phosphoribosyltransferase from Sulfurisphaera tokodaii (strain DSM 16993 / JCM 10545 / NBRC 100140 / 7) (Sulfolobus tokodaii).